The sequence spans 165 residues: Cysteine-rich hydrophobic domain-containing protein 2 (165 aa).

Positions Met-1 to Ser-26 form a coiled coil. A CHIC motif (Cys-rich) motif is present at residues Cys-88 to Cys-106.

The protein belongs to the CHIC family. Post-translationally, palmitoylation in the CHIC motif is required for membrane association.

It localises to the membrane. The protein localises to the golgi apparatus. This Mus musculus (Mouse) protein is Cysteine-rich hydrophobic domain-containing protein 2 (Chic2).